A 484-amino-acid polypeptide reads, in one-letter code: Probable glycine dehydrogenase (decarboxylating) subunit 2 (484 aa).

Residue Lys-270 is modified to N6-(pyridoxal phosphate)lysine.

It belongs to the GcvP family. C-terminal subunit subfamily. In terms of assembly, the glycine cleavage system is composed of four proteins: P, T, L and H. In this organism, the P 'protein' is a heterodimer of two subunits. It depends on pyridoxal 5'-phosphate as a cofactor.

The enzyme catalyses N(6)-[(R)-lipoyl]-L-lysyl-[glycine-cleavage complex H protein] + glycine + H(+) = N(6)-[(R)-S(8)-aminomethyldihydrolipoyl]-L-lysyl-[glycine-cleavage complex H protein] + CO2. Its function is as follows. The glycine cleavage system catalyzes the degradation of glycine. The P protein binds the alpha-amino group of glycine through its pyridoxal phosphate cofactor; CO(2) is released and the remaining methylamine moiety is then transferred to the lipoamide cofactor of the H protein. The polypeptide is Probable glycine dehydrogenase (decarboxylating) subunit 2 (Desulforamulus reducens (strain ATCC BAA-1160 / DSM 100696 / MI-1) (Desulfotomaculum reducens)).